The chain runs to 374 residues: MGELGALQSIVYHRGSLRLLDQRKLPLEVDYIDVKCSGDGWNAIRDMVVRGAPAIAIAAALALAVEVSGLEDFTGTPAEAAVFVSEKLEYLVSSRPTAVNLSDAATKLRSLVSRTAETEKDAKAIFQAYIDAAETMLVDDVSDNKAIGSHGAEFLKQKLEVSKDISVLTHCNTGSLATAGYGTALGVIRALHSGGILEKAFCTETRPFNQGSRLTAFELVHDKVPATLIADSAAAALMKSGCIQAVIVGADRIAANGDTANKIGTYNLAISAKHHGVQFYVAAPITSIDLSLPSGEQIVIEERSPNELLNSEGGLGKQVAASGISVWNPAFDVTPANLITAIITEKGVITKSDADETFNIKDFIQSAKLYSTMQ.

Residue aspartate 251 is the Proton donor of the active site.

This sequence belongs to the eIF-2B alpha/beta/delta subunits family. MtnA subfamily.

It is found in the cytoplasm. It localises to the nucleus. It catalyses the reaction 5-(methylsulfanyl)-alpha-D-ribose 1-phosphate = 5-(methylsulfanyl)-D-ribulose 1-phosphate. It participates in amino-acid biosynthesis; L-methionine biosynthesis via salvage pathway; L-methionine from S-methyl-5-thio-alpha-D-ribose 1-phosphate: step 1/6. In terms of biological role, catalyzes the interconversion of methylthioribose-1-phosphate (MTR-1-P) into methylthioribulose-1-phosphate (MTRu-1-P). The polypeptide is Methylthioribose-1-phosphate isomerase (IDI2) (Oryza sativa subsp. japonica (Rice)).